A 577-amino-acid polypeptide reads, in one-letter code: Jasmonoyl--L-amino acid synthetase JAR4 (577 aa).

Ser99 contacts ATP. Jasmonate is bound at residue Ser102. ATP contacts are provided by residues Met119, Thr122, Gly163, Asn168, and 331 to 336 (GSSEGW). An L-alpha-amino acid is bound at residue 166 to 170 (TTNVY). 328 to 331 (ADYG) is a binding site for jasmonate. 531–535 (KILDH) serves as a coordination point for an L-alpha-amino acid.

This sequence belongs to the IAA-amido conjugating enzyme family.

It carries out the reaction a jasmonate + an L-alpha-amino acid + ATP = a jasmonyl-L-amino acid + AMP + diphosphate + H(+). In terms of biological role, catalyzes the synthesis of jasmonate-amino acid conjugates by adenylation. Catalyzes the conjugation of jasmonate (JA) to Ile, Leu and Val. Catalyzes the conjugation of jasmonate (JA) to Ile to mediate defense signaling and resistance to the herbivore Manduca sexta caterpillars. The chain is Jasmonoyl--L-amino acid synthetase JAR4 from Nicotiana attenuata (Coyote tobacco).